The following is a 151-amino-acid chain: Large ribosomal subunit protein bL9 (151 aa).

It belongs to the bacterial ribosomal protein bL9 family.

Its function is as follows. Binds to the 23S rRNA. The protein is Large ribosomal subunit protein bL9 of Chlorobium phaeovibrioides (strain DSM 265 / 1930) (Prosthecochloris vibrioformis (strain DSM 265)).